A 125-amino-acid chain; its full sequence is NADH dehydrogenase [ubiquinone] 1 beta subcomplex subunit 8, mitochondrial (125 aa).

Residues 1 to 29 constitute a mitochondrion transit peptide; sequence MAGRLSGVASRIMGGNGVVARSVGSSLRQ. Residues 78 to 98 form a helical membrane-spanning segment; the sequence is ALAWLSGGLGFFVGLGLLAVL.

It belongs to the complex I NDUFB8 subunit family. Complex I is composed of at least 49 different subunits.

It is found in the mitochondrion inner membrane. Functionally, accessory subunit of the mitochondrial membrane respiratory chain NADH dehydrogenase (Complex I), that is believed not to be involved in catalysis. Complex I functions in the transfer of electrons from NADH to the respiratory chain. The immediate electron acceptor for the enzyme is believed to be ubiquinone. This is NADH dehydrogenase [ubiquinone] 1 beta subcomplex subunit 8, mitochondrial from Arabidopsis thaliana (Mouse-ear cress).